A 356-amino-acid chain; its full sequence is Uroporphyrinogen decarboxylase (356 aa).

Substrate-binding positions include 27-31 (RQAGR), D77, Y154, T209, and H327.

It belongs to the uroporphyrinogen decarboxylase family. In terms of assembly, homodimer.

Its subcellular location is the cytoplasm. The catalysed reaction is uroporphyrinogen III + 4 H(+) = coproporphyrinogen III + 4 CO2. Its pathway is porphyrin-containing compound metabolism; protoporphyrin-IX biosynthesis; coproporphyrinogen-III from 5-aminolevulinate: step 4/4. Its function is as follows. Catalyzes the decarboxylation of four acetate groups of uroporphyrinogen-III to yield coproporphyrinogen-III. This Hamiltonella defensa subsp. Acyrthosiphon pisum (strain 5AT) protein is Uroporphyrinogen decarboxylase.